A 105-amino-acid polypeptide reads, in one-letter code: MRKIKRDDEVIVIAGKDKGKRGTIKRVLQDGCYVVSGVNMIKRHTKPNPMQGKQGGIVEREAPIHASNVAIFNQETGKADRVGFQIQEDGTKVRIYKSTQKQIDA.

Belongs to the universal ribosomal protein uL24 family. As to quaternary structure, part of the 50S ribosomal subunit.

In terms of biological role, one of two assembly initiator proteins, it binds directly to the 5'-end of the 23S rRNA, where it nucleates assembly of the 50S subunit. Functionally, one of the proteins that surrounds the polypeptide exit tunnel on the outside of the subunit. This Chromohalobacter salexigens (strain ATCC BAA-138 / DSM 3043 / CIP 106854 / NCIMB 13768 / 1H11) protein is Large ribosomal subunit protein uL24.